Consider the following 126-residue polypeptide: Large ribosomal subunit protein mL55 (126 aa).

The transit peptide at 1–34 (MSAKGSLLRLLWQCGMTRAAPESCRYLYTSSWRA) directs the protein to the mitochondrion. S86 is modified (phosphoserine).

This sequence belongs to the mitochondrion-specific ribosomal protein mL55 family. Component of the mitochondrial ribosome large subunit (39S) which comprises a 16S rRNA and about 50 distinct proteins.

The protein resides in the mitochondrion. This Bos taurus (Bovine) protein is Large ribosomal subunit protein mL55 (MRPL55).